We begin with the raw amino-acid sequence, 354 residues long: MKNKNKRLLVMAGGTGGHVFPGLAVAKQLQSEGWEIRWLGTADRMEADLVPKHGIEIDFIKVKGLRGQGLKKLIAAPFQILGAISQAKKHIKAWQPDVVLGMGGYVSGPGGIAAWLSGIPVVLHEQNAVAGLTNQWLSKIAKRVFQAFPGAFPNAEVVGNPVREDVCQLPHPKERFAQRTGPIRLLVMGGSQGARILNTTLPEALPQLSHEIEIWHQAGKGSQETVEQAYRDNGIADAKVTEFIDNVAEAYAWADLLVCRSGALTVSEVSAAGVGSIFIPFMHKDRQQALNADHLVQCGAAQMIEQQDLTVQGLVDTLNGLERKQLLDMACNARDAAIIDADVRVANAIKSLAK.

Residues 15–17 (TGG), N127, R163, S191, I244, 263–268 (ALTVSE), and Q288 contribute to the UDP-N-acetyl-alpha-D-glucosamine site.

The protein belongs to the glycosyltransferase 28 family. MurG subfamily.

The protein resides in the cell inner membrane. The catalysed reaction is di-trans,octa-cis-undecaprenyl diphospho-N-acetyl-alpha-D-muramoyl-L-alanyl-D-glutamyl-meso-2,6-diaminopimeloyl-D-alanyl-D-alanine + UDP-N-acetyl-alpha-D-glucosamine = di-trans,octa-cis-undecaprenyl diphospho-[N-acetyl-alpha-D-glucosaminyl-(1-&gt;4)]-N-acetyl-alpha-D-muramoyl-L-alanyl-D-glutamyl-meso-2,6-diaminopimeloyl-D-alanyl-D-alanine + UDP + H(+). It participates in cell wall biogenesis; peptidoglycan biosynthesis. Functionally, cell wall formation. Catalyzes the transfer of a GlcNAc subunit on undecaprenyl-pyrophosphoryl-MurNAc-pentapeptide (lipid intermediate I) to form undecaprenyl-pyrophosphoryl-MurNAc-(pentapeptide)GlcNAc (lipid intermediate II). This chain is UDP-N-acetylglucosamine--N-acetylmuramyl-(pentapeptide) pyrophosphoryl-undecaprenol N-acetylglucosamine transferase, found in Aliivibrio fischeri (strain MJ11) (Vibrio fischeri).